The chain runs to 512 residues: Serine/threonine-protein kinase grp (512 aa).

The Protein kinase domain occupies Trp-22 to Cys-279. Residues Leu-28–Val-36 and Lys-51 contribute to the ATP site. Residue Asp-143 is the Proton acceptor of the active site. The segment at Pro-335–Gln-360 is disordered.

Belongs to the protein kinase superfamily. CAMK Ser/Thr protein kinase family. NIM1 subfamily. Post-translationally, phosphorylated in a MEI-41/ATR dependent manner in response to DNA damage or the presence of unreplicated DNA.

The protein resides in the nucleus. It carries out the reaction L-seryl-[protein] + ATP = O-phospho-L-seryl-[protein] + ADP + H(+). The enzyme catalyses L-threonyl-[protein] + ATP = O-phospho-L-threonyl-[protein] + ADP + H(+). Its function is as follows. Serine/threonine-protein kinase which is required for checkpoint-mediated cell cycle arrest and activation of DNA repair in response to the presence of DNA damage or unreplicated DNA. May also negatively regulate cell cycle progression during unperturbed cell cycles. May phosphorylate the CDC25 phosphatase stg, which promotes its degradation. This results in increased inhibitory tyrosine phosphorylation of Cdk1-cyclin complexes and consequent inhibition of cell cycle progression. This chain is Serine/threonine-protein kinase grp, found in Drosophila melanogaster (Fruit fly).